Consider the following 181-residue polypeptide: Lysozyme A (181 aa).

Positions 1 to 19 (MRIAFFLLVLAVIIGFAYG) are cleaved as a signal peptide. The propeptide occupies 139–181 (LTDSRPLGPFNVTESEMAQLFIDHEIAMAQCEAEKTCNGFDLE).

It belongs to the dictyostelium lysozyme family. Post-translationally, contains six disulfide bonds.

It is found in the cytoplasmic vesicle lumen. The catalysed reaction is Hydrolysis of 1,4-beta-linkages between N-acetylmuramic acid and N-acetyl-D-glucosamine residues in a peptidoglycan.. Has antibacterial activity against the Gram-positive bacteria B.subtilis, B.megaterium and M.luteus. No antibacterial activity detected against the Gram-positive bacterium S.aureus or against the Gram-negative bacterium E.coli. Lacks chitinase activity. The sequence is that of Lysozyme A from Dictyostelium discoideum (Social amoeba).